Reading from the N-terminus, the 148-residue chain is Large ribosomal subunit protein uL15 (148 aa).

Positions 18–38 (GYGRVGKHRKHPGGRGNAGGL) are disordered.

The protein belongs to the universal ribosomal protein uL15 family.

The protein is Large ribosomal subunit protein uL15 (rpl27a) of Dictyostelium discoideum (Social amoeba).